Consider the following 348-residue polypeptide: Protein arginine N-methyltransferase 1 (348 aa).

Positions 20-322 constitute an SAM-dependent MTase PRMT-type domain; the sequence is EQHYFNSYDH…EKNNRDLNIK (303 aa). Residues histidine 33, arginine 42, glycine 66, aspartate 88, and glutamate 117 each contribute to the S-adenosyl-L-methionine site. Catalysis depends on residues glutamate 132 and glutamate 141.

This sequence belongs to the class I-like SAM-binding methyltransferase superfamily. Protein arginine N-methyltransferase family. Homodimer. The dimers can then associate to form a ring-shaped homohexamer. Interacts with NPL3, BRE5, MTR4, SNF2, SUM1, and SSD1.

The protein resides in the nucleus. It carries out the reaction L-arginyl-[protein] + S-adenosyl-L-methionine = N(omega)-methyl-L-arginyl-[protein] + S-adenosyl-L-homocysteine + H(+). The enzyme catalyses L-arginyl-[protein] + 2 S-adenosyl-L-methionine = N(omega),N(omega)-dimethyl-L-arginyl-[protein] + 2 S-adenosyl-L-homocysteine + 2 H(+). Its function is as follows. S-adenosyl-L-methionine-dependent protein-arginine N-methyltransferase that catalyzes both the mono- and asymmetric (type I) dimethylation of the guanidino nitrogens of arginine residues in a variety of RNA-binding proteins such as heterogeneous nuclear ribonucleoproteins (hnRNPs) and small nuclear ribonucleoproteins (snRNPs). Methylates NAB2, NPL3, HRP1 and YRA1, shuttling hnRNPs involved in mRNA processing and export, facilitating their export out of the nucleus. Methylation of NPL3 weakens its interaction with THO2, a component of the TREX (transcription/export) complex important for transcriptional elongation and recruitment of mRNA export factors. Methylates the hnRNP HRB1, but does not influence its subcellular location. Methylates the nucleolar proteins GAR1, NOP1 and NSR1. Methylates the snRNP SNP1 and modulates the cotranscriptional recruitment of splicing factors. Dimethylates free histone H4 (HHF1/HHF2) at 'Arg-4' (H4R3me2a) and plays a role in preservation and establishment of silent chromatin domains. Mono- and dimethylates ribosomal protein S2 (RPS2) at 'Arg-11'. Methylates the catalytic subunit of the SWI/SNF chromatin-remodeling complex SNF2. The sequence is that of Protein arginine N-methyltransferase 1 from Saccharomyces cerevisiae (strain ATCC 204508 / S288c) (Baker's yeast).